The chain runs to 425 residues: Cytokine receptor-like factor 1 (425 aa).

A signal peptide spans 1–33 (MPAGRPGPVAQSARRPPRPLSSLWSPLLLCVLG). The 100-residue stretch at 35–134 (PRGGSGAHTA…SILAGSCLYV (100 aa)) folds into the Ig-like C2-type domain. 3 N-linked (GlcNAc...) asparagine glycosylation sites follow: Asn95, Asn107, and Asn143. Fibronectin type-III domains lie at 140–235 (KPFN…VLDV) and 240–344 (PPPD…TPRS). Cys146 and Cys156 are disulfide-bonded. N-linked (GlcNAc...) asparagine glycosylation occurs at Asn171. A disulfide bridge connects residues Cys187 and Cys198. At Ser222 the chain carries Phosphoserine. An N-linked (GlcNAc...) asparagine glycan is attached at Asn295. Positions 330–334 (WSEWS) match the WSXWS motif motif. The interval 335–366 (HPTAASTPRSERPGPGGGVCEPRGGEPSSGPV) is disordered. Asn385 carries N-linked (GlcNAc...) asparagine glycosylation. The interval 402–425 (HKTRNQDEGILPSGRRGAARGPAG) is disordered. Residues 415 to 425 (GRRGAARGPAG) are compositionally biased toward low complexity.

The protein belongs to the type I cytokine receptor family. Type 3 subfamily. In terms of assembly, forms covalent di- and tetramers. Forms a heteromeric complex with cardiotrophin-like cytokine CLCF1/CLC; the CRLF1-CLCF1 complex is a ligand for the ciliary neurotrophic factor receptor/CNTFR. The CRLF1-CLCF1 heterodimer, as well as tripartite signaling complex formed by CRLF1, CLCF1 and CNTFR bind SORL1 (via N-terminal ectodomain); within this complex, the interaction is mediated predominantly by the CRLF1 moiety. As to expression, widely expressed in the embryo. Not detected in the brain of adult mice.

The protein resides in the secreted. Its function is as follows. In complex with CLCF1, forms a heterodimeric neurotropic cytokine that plays a crucial role during neuronal development. Plays a role in the initiation and/or maintenance of suckling in neonatal mice. May also play a regulatory role in the immune system. The protein is Cytokine receptor-like factor 1 (Crlf1) of Mus musculus (Mouse).